Consider the following 100-residue polypeptide: U-myrmeciitoxin(01)-Mg7c (100 aa).

The signal sequence occupies residues 1–17 (MKLSYLSLALAIILVLA). Positions 18–50 (IVYSPHMEVKALADAEPDAIGFADAFGEADAEP) are excised as a propeptide. The O-linked (GalNAc...) serine glycan is linked to S85. O-linked (GalNAc...) threonine glycosylation is found at T94 and T95.

Belongs to the formicidae venom precursor-01 superfamily. Glycosylation is critical to maintaining the aqueous solubility of this protein, but does not directly contribute to its activity. Expressed by the venom gland.

The protein resides in the secreted. The protein localises to the target cell membrane. Its function is as follows. Neurotoxin that triggers pain behavior and inflammation in mammals, and is paralytic and lethal to insects. Causes a time-dependent increase in cell leak current. May act by targeting membranes. The sequence is that of U-myrmeciitoxin(01)-Mg7c from Myrmecia gulosa (Red bulldog ant).